The primary structure comprises 108 residues: Insulin (108 aa).

An N-terminal signal peptide occupies residues Met-1–Thr-21. Disulfide bonds link Cys-30-Cys-94, Cys-42-Cys-107, and Cys-93-Cys-98. Positions Asp-54–Ile-84 are cleaved as a propeptide — c peptide.

The protein belongs to the insulin family. Heterodimer of a B chain and an A chain linked by two disulfide bonds.

It localises to the secreted. Functionally, insulin decreases blood glucose concentration. It increases cell permeability to monosaccharides, amino acids and fatty acids. It accelerates glycolysis, the pentose phosphate cycle, and glycogen synthesis in liver. The sequence is that of Insulin (ins) from Danio rerio (Zebrafish).